Here is a 167-residue protein sequence, read N- to C-terminus: MNIRHQLVQFLNLALVLSSAFMAWKTLSVITNSHSPIVVVLSGSMEPAFQRGDILFLWNRDNHAKVGDVVVYEIKGKSIPIVHRVLREHHNAESKQFLLTKGDNNAVDDLGLYAKKQAYLNQKTDLVGTVKGYLPMVGYITILITENIYFRYTLLGLMGISSLLSNE.

Residues 1-12 (MNIRHQLVQFLN) lie on the Cytoplasmic side of the membrane. Residues 13–30 (LALVLSSAFMAWKTLSVI) form a helical; Signal-anchor for type II membrane protein membrane-spanning segment. The Lumenal segment spans residues 31-167 (TNSHSPIVVV…MGISSLLSNE (137 aa)). Catalysis depends on charge relay system residues Ser44, His83, and Asp109. Residues 153 to 164 (TLLGLMGISSLL) form a C-terminal short (CTS) helix region.

It belongs to the peptidase S26B family. As to quaternary structure, component of the signal peptidase complex (SPC) composed of a catalytic subunit SEC11 and three accessory subunits SPC1, SPC2 and SPC3. The complex induces a local thinning of the ER membrane which is used to measure the length of the signal peptide (SP) h-region of protein substrates. This ensures the selectivity of the complex towards h-regions shorter than 18-20 amino acids. SPC associates with the translocon complex.

It localises to the endoplasmic reticulum membrane. The catalysed reaction is Cleavage of hydrophobic, N-terminal signal or leader sequences from secreted and periplasmic proteins.. Functionally, catalytic component of the signal peptidase complex (SPC) which catalyzes the cleavage of N-terminal signal sequences from nascent proteins as they are translocated into the lumen of the endoplasmic reticulum. Specifically cleaves N-terminal signal peptides that contain a hydrophobic alpha-helix (h-region) shorter than 18-20 amino acids. This chain is Signal peptidase complex catalytic subunit SEC11 (SEC11), found in Debaryomyces hansenii (strain ATCC 36239 / CBS 767 / BCRC 21394 / JCM 1990 / NBRC 0083 / IGC 2968) (Yeast).